The following is a 487-amino-acid chain: Proline--tRNA ligase (487 aa).

It belongs to the class-II aminoacyl-tRNA synthetase family. ProS type 3 subfamily. In terms of assembly, homodimer.

It is found in the cytoplasm. It catalyses the reaction tRNA(Pro) + L-proline + ATP = L-prolyl-tRNA(Pro) + AMP + diphosphate. Functionally, catalyzes the attachment of proline to tRNA(Pro) in a two-step reaction: proline is first activated by ATP to form Pro-AMP and then transferred to the acceptor end of tRNA(Pro). This Pyrobaculum neutrophilum (strain DSM 2338 / JCM 9278 / NBRC 100436 / V24Sta) (Thermoproteus neutrophilus) protein is Proline--tRNA ligase.